The sequence spans 361 residues: Putative geranylgeranyl pyrophosphate synthase 8, chloroplastic (361 aa).

A chloroplast-targeting transit peptide spans M1–S39. Residues I24 to N58 form a disordered region. Residues L36–G46 show a composition bias toward polar residues. Isopentenyl diphosphate-binding residues include K107, R110, and H139. Residues D146 and D152 each coordinate Mg(2+). Residue R157 coordinates dimethylallyl diphosphate. Isopentenyl diphosphate is bound at residue R158. Residues K246, T247, Q284, K301, and K311 each coordinate dimethylallyl diphosphate.

This sequence belongs to the FPP/GGPP synthase family. Monomer. The cofactor is Mg(2+).

It localises to the plastid. The protein resides in the chloroplast. The catalysed reaction is isopentenyl diphosphate + dimethylallyl diphosphate = (2E)-geranyl diphosphate + diphosphate. The enzyme catalyses isopentenyl diphosphate + (2E)-geranyl diphosphate = (2E,6E)-farnesyl diphosphate + diphosphate. It catalyses the reaction isopentenyl diphosphate + (2E,6E)-farnesyl diphosphate = (2E,6E,10E)-geranylgeranyl diphosphate + diphosphate. It functions in the pathway isoprenoid biosynthesis; farnesyl diphosphate biosynthesis; farnesyl diphosphate from geranyl diphosphate and isopentenyl diphosphate: step 1/1. It participates in isoprenoid biosynthesis; geranyl diphosphate biosynthesis; geranyl diphosphate from dimethylallyl diphosphate and isopentenyl diphosphate: step 1/1. Its pathway is isoprenoid biosynthesis; geranylgeranyl diphosphate biosynthesis; geranylgeranyl diphosphate from farnesyl diphosphate and isopentenyl diphosphate: step 1/1. In terms of biological role, catalyzes the trans-addition of the three molecules of IPP onto DMAPP to form geranylgeranyl pyrophosphate. This chain is Putative geranylgeranyl pyrophosphate synthase 8, chloroplastic, found in Arabidopsis thaliana (Mouse-ear cress).